A 324-amino-acid chain; its full sequence is 1-deoxyxylulose-5-phosphate synthase YajO (324 aa).

Catalysis depends on Y61, which acts as the Proton donor.

The protein belongs to the aldo/keto reductase family. Aldo/keto reductase 2 subfamily.

It carries out the reaction D-ribulose 5-phosphate + AH2 = 1-deoxy-D-xylulose 5-phosphate + A + H2O. With respect to regulation, NADH, NADPH or ATP do not increase activity. Functionally, catalyzes the conversion of ribulose 5-phosphate (Ru5P) to 1-deoxy-D-xylulose 5-phosphate (DXP), providing a direct route from pentoses to terpenes. May play a role in biosynthesis of DXP under conditions of thiamine starvation. This Escherichia coli (strain K12) protein is 1-deoxyxylulose-5-phosphate synthase YajO (yajO).